An 819-amino-acid chain; its full sequence is DNA topoisomerase 4 subunit A (819 aa).

The region spanning 30-496 (LPDIRDGLKP…QIIEIDTASL (467 aa)) is the Topo IIA-type catalytic domain. The active-site O-(5'-phospho-DNA)-tyrosine intermediate is the tyrosine 118.

It belongs to the type II topoisomerase GyrA/ParC subunit family. ParC type 2 subfamily. In terms of assembly, heterotetramer composed of ParC and ParE.

The protein localises to the cell membrane. It catalyses the reaction ATP-dependent breakage, passage and rejoining of double-stranded DNA.. Its function is as follows. Topoisomerase IV is essential for chromosome segregation. It relaxes supercoiled DNA. Performs the decatenation events required during the replication of a circular DNA molecule. The protein is DNA topoisomerase 4 subunit A of Streptococcus pyogenes serotype M6 (strain ATCC BAA-946 / MGAS10394).